The following is a 209-amino-acid chain: Ribosomal RNA large subunit methyltransferase E (209 aa).

Residues Gly63, Trp65, Asp83, Asp99, and Asp124 each contribute to the S-adenosyl-L-methionine site. The active-site Proton acceptor is Lys164.

Belongs to the class I-like SAM-binding methyltransferase superfamily. RNA methyltransferase RlmE family.

The protein resides in the cytoplasm. It catalyses the reaction uridine(2552) in 23S rRNA + S-adenosyl-L-methionine = 2'-O-methyluridine(2552) in 23S rRNA + S-adenosyl-L-homocysteine + H(+). Specifically methylates the uridine in position 2552 of 23S rRNA at the 2'-O position of the ribose in the fully assembled 50S ribosomal subunit. In Shewanella pealeana (strain ATCC 700345 / ANG-SQ1), this protein is Ribosomal RNA large subunit methyltransferase E.